We begin with the raw amino-acid sequence, 904 residues long: Nitrate reductase [NADH] 2 (904 aa).

2 stretches are compositionally biased toward polar residues: residues 1-10 (MAASVENRQF) and 35-50 (PSPNSTNFQKKPNSTI). A disordered region spans residues 1–65 (MAASVENRQF…SSEDDDDDDE (65 aa)). A compositionally biased stretch (acidic residues) spans 56 to 65 (SSEDDDDDDE). Cys-183 is a Mo-molybdopterin binding site. The region spanning 531–606 (SKMYSMSEVR…LEDFRIGELI (76 aa)) is the Cytochrome b5 heme-binding domain. Heme contacts are provided by His-566 and His-589. The 113-residue stretch at 647–759 (REKIPCKLID…KGPLGHIEYQ (113 aa)) folds into the FAD-binding FR-type domain. Residues 699-702 (RAYT), 716-720 (VVKIY), Phe-721, Phe-728, 733-735 (QMS), and Thr-786 contribute to the FAD site.

It belongs to the nitrate reductase family. As to quaternary structure, homodimer. FAD is required as a cofactor. Heme serves as cofactor. It depends on Mo-molybdopterin as a cofactor.

The enzyme catalyses nitrite + NAD(+) + H2O = nitrate + NADH + H(+). With respect to regulation, regulated by the nitrogen source and controlled by the circadian rhythm. In terms of biological role, nitrate reductase is a key enzyme involved in the first step of nitrate assimilation in plants, fungi and bacteria. This Nicotiana tabacum (Common tobacco) protein is Nitrate reductase [NADH] 2 (NIA2).